Here is a 340-residue protein sequence, read N- to C-terminus: Toxin coregulated pilus biosynthesis protein E (340 aa).

The next 3 helical transmembrane spans lie at 108–131 (AISSMITPSVMLIVTMVVIAGYSV), 146–161 (WPGVTQALYNLGFSLY), and 312–333 (NISLITLALSVIWIFGAIFSLV).

This sequence belongs to the GSP F family.

Its subcellular location is the cell inner membrane. Functionally, probably involved in cholera toxin receptor (GM1) interaction in order to bring the cells within close proximity of the ganglioside for efficient toxin delivery. This chain is Toxin coregulated pilus biosynthesis protein E (tcpE), found in Vibrio cholerae serotype O1 (strain ATCC 39315 / El Tor Inaba N16961).